A 247-amino-acid chain; its full sequence is NAD(P)H-quinone oxidoreductase subunit K (247 aa).

[4Fe-4S] cluster-binding residues include cysteine 63, cysteine 64, cysteine 128, and cysteine 159.

Belongs to the complex I 20 kDa subunit family. NDH-1 can be composed of about 15 different subunits; different subcomplexes with different compositions have been identified which probably have different functions. It depends on [4Fe-4S] cluster as a cofactor.

It localises to the cellular thylakoid membrane. The enzyme catalyses a plastoquinone + NADH + (n+1) H(+)(in) = a plastoquinol + NAD(+) + n H(+)(out). The catalysed reaction is a plastoquinone + NADPH + (n+1) H(+)(in) = a plastoquinol + NADP(+) + n H(+)(out). In terms of biological role, NDH-1 shuttles electrons from an unknown electron donor, via FMN and iron-sulfur (Fe-S) centers, to quinones in the respiratory and/or the photosynthetic chain. The immediate electron acceptor for the enzyme in this species is believed to be plastoquinone. Couples the redox reaction to proton translocation, and thus conserves the redox energy in a proton gradient. Cyanobacterial NDH-1 also plays a role in inorganic carbon-concentration. The protein is NAD(P)H-quinone oxidoreductase subunit K of Gloeothece citriformis (strain PCC 7424) (Cyanothece sp. (strain PCC 7424)).